The primary structure comprises 111 residues: Phosphoribosyl-ATP pyrophosphatase (111 aa).

Belongs to the PRA-PH family.

It localises to the cytoplasm. The enzyme catalyses 1-(5-phospho-beta-D-ribosyl)-ATP + H2O = 1-(5-phospho-beta-D-ribosyl)-5'-AMP + diphosphate + H(+). It participates in amino-acid biosynthesis; L-histidine biosynthesis; L-histidine from 5-phospho-alpha-D-ribose 1-diphosphate: step 2/9. The protein is Phosphoribosyl-ATP pyrophosphatase (hisE) of Azospirillum brasilense.